Here is a 431-residue protein sequence, read N- to C-terminus: F-box protein pof14 (431 aa).

The region spanning 172–186 is the F-box; atypical domain; the sequence is CPDEILQLIFSYCYD.

In terms of assembly, component of the E3 ubiquitin ligase Skp1-Cullin-1-F-box (SCF) complex. Interacts with skp1, cul1 and erg9.

The protein localises to the cytoplasm. It localises to the nucleus. It is found in the endoplasmic reticulum. Expression is induced during oxidative stress. Plays an essential, SCF-independent, role in the stress response to hydrogen peroxide for survival, by negatively regulating ergosterol synthesis via direct binding to the squalene synthase erg9. The sequence is that of F-box protein pof14 (pof14) from Schizosaccharomyces pombe (strain 972 / ATCC 24843) (Fission yeast).